A 124-amino-acid chain; its full sequence is Small ribosomal subunit protein uS12 (124 aa).

The disordered stretch occupies residues 1–22; it reads MATVNQLVRKPRQKPDAKSNVA. Asp-89 is subject to 3-methylthioaspartic acid.

It belongs to the universal ribosomal protein uS12 family. In terms of assembly, part of the 30S ribosomal subunit. Contacts proteins S8 and S17. May interact with IF1 in the 30S initiation complex.

Its function is as follows. With S4 and S5 plays an important role in translational accuracy. Interacts with and stabilizes bases of the 16S rRNA that are involved in tRNA selection in the A site and with the mRNA backbone. Located at the interface of the 30S and 50S subunits, it traverses the body of the 30S subunit contacting proteins on the other side and probably holding the rRNA structure together. The combined cluster of proteins S8, S12 and S17 appears to hold together the shoulder and platform of the 30S subunit. This Pseudoalteromonas atlantica (strain T6c / ATCC BAA-1087) protein is Small ribosomal subunit protein uS12.